The primary structure comprises 125 residues: Large ribosomal subunit protein bL12 (125 aa).

It belongs to the bacterial ribosomal protein bL12 family. In terms of assembly, homodimer. Part of the ribosomal stalk of the 50S ribosomal subunit. Forms a multimeric L10(L12)X complex, where L10 forms an elongated spine to which 2 to 4 L12 dimers bind in a sequential fashion. Binds GTP-bound translation factors.

In terms of biological role, forms part of the ribosomal stalk which helps the ribosome interact with GTP-bound translation factors. Is thus essential for accurate translation. This chain is Large ribosomal subunit protein bL12, found in Rickettsia prowazekii (strain Madrid E).